We begin with the raw amino-acid sequence, 1451 residues long: Dicer-like protein 2 (1451 aa).

Residues 34–53 (YDGHLSEEDSPGGKPRPKEQ) form a disordered region. Residues 70–247 (MLEASLKENI…LKRLESTLDA (178 aa)) enclose the Helicase ATP-binding domain. 83–90 (MDTGSGKT) is an ATP binding site. A DEAH box motif is present at residues 190–193 (DEAH). The region spanning 412 to 582 (KVQRIIEVLL…RLEAIENSEA (171 aa)) is the Helicase C-terminal domain. The Dicer dsRNA-binding fold domain maps to 603 to 704 (AKSHLQHFVS…LPLRDRLELE (102 aa)). RNase III domains follow at residues 968–1111 (AAEL…VDGG) and 1153–1351 (LQLL…VDAG). E1192 is a binding site for Mg(2+). Positions 1253 to 1272 (EGDSDSKSSGDSTSDKASPR) are disordered. D1337 and E1340 together coordinate Mg(2+).

It belongs to the helicase family. Dicer subfamily. Mg(2+) is required as a cofactor. The cofactor is Mn(2+).

Dicer-like endonuclease involved in cleaving double-stranded RNA in the RNA interference (RNAi) pathway. Produces 21 to 25 bp dsRNAs (siRNAs) which target the selective destruction of homologous RNAs leading to sequence-specific suppression of gene expression, called post-transcriptional gene silencing (PTGS). Part of a broad host defense, DCL-2 is involved in antiviral defense against mycoviruses like the hypovirus CHV1-EP713 and the reovirus MyRV1-Cp9B21. This is Dicer-like protein 2 (DCL-2) from Cryphonectria parasitica (Chestnut blight fungus).